Consider the following 465-residue polypeptide: L-seryl-tRNA(Sec) selenium transferase (465 aa).

N6-(pyridoxal phosphate)lysine is present on lysine 294.

Belongs to the SelA family. Pyridoxal 5'-phosphate is required as a cofactor.

The protein resides in the cytoplasm. The catalysed reaction is L-seryl-tRNA(Sec) + selenophosphate + H(+) = L-selenocysteinyl-tRNA(Sec) + phosphate. It functions in the pathway aminoacyl-tRNA biosynthesis; selenocysteinyl-tRNA(Sec) biosynthesis; selenocysteinyl-tRNA(Sec) from L-seryl-tRNA(Sec) (bacterial route): step 1/1. Its function is as follows. Converts seryl-tRNA(Sec) to selenocysteinyl-tRNA(Sec) required for selenoprotein biosynthesis. This is L-seryl-tRNA(Sec) selenium transferase from Maridesulfovibrio salexigens (strain ATCC 14822 / DSM 2638 / NCIMB 8403 / VKM B-1763) (Desulfovibrio salexigens).